A 272-amino-acid polypeptide reads, in one-letter code: Ribosomal RNA small subunit methyltransferase A (272 aa).

S-adenosyl-L-methionine-binding residues include N18, L20, G45, E66, D91, and N113.

Belongs to the class I-like SAM-binding methyltransferase superfamily. rRNA adenine N(6)-methyltransferase family. RsmA subfamily.

The protein resides in the cytoplasm. The catalysed reaction is adenosine(1518)/adenosine(1519) in 16S rRNA + 4 S-adenosyl-L-methionine = N(6)-dimethyladenosine(1518)/N(6)-dimethyladenosine(1519) in 16S rRNA + 4 S-adenosyl-L-homocysteine + 4 H(+). Specifically dimethylates two adjacent adenosines (A1518 and A1519) in the loop of a conserved hairpin near the 3'-end of 16S rRNA in the 30S particle. May play a critical role in biogenesis of 30S subunits. In Pectobacterium atrosepticum (strain SCRI 1043 / ATCC BAA-672) (Erwinia carotovora subsp. atroseptica), this protein is Ribosomal RNA small subunit methyltransferase A.